The sequence spans 347 residues: Phenylalanine--tRNA ligase alpha subunit (347 aa).

Residue Glu-265 participates in Mg(2+) binding.

Belongs to the class-II aminoacyl-tRNA synthetase family. Phe-tRNA synthetase alpha subunit type 1 subfamily. As to quaternary structure, tetramer of two alpha and two beta subunits. Mg(2+) serves as cofactor.

The protein resides in the cytoplasm. It catalyses the reaction tRNA(Phe) + L-phenylalanine + ATP = L-phenylalanyl-tRNA(Phe) + AMP + diphosphate + H(+). This chain is Phenylalanine--tRNA ligase alpha subunit, found in Mycolicibacterium gilvum (strain PYR-GCK) (Mycobacterium gilvum (strain PYR-GCK)).